The following is a 955-amino-acid chain: Protein translocase subunit SecA (955 aa).

Residues Gln87, Gly105–Thr109, and Asp494 contribute to the ATP site. Residues Ala861 to Arg955 form a disordered region. Low complexity predominate over residues Gln874–Ala888. The segment covering Ser943–Arg955 has biased composition (basic residues).

The protein belongs to the SecA family. As to quaternary structure, monomer and homodimer. Part of the essential Sec protein translocation apparatus which comprises SecA, SecYEG and auxiliary proteins SecDF. Other proteins may also be involved.

The protein resides in the cell membrane. The protein localises to the cytoplasm. The enzyme catalyses ATP + H2O + cellular proteinSide 1 = ADP + phosphate + cellular proteinSide 2.. Part of the Sec protein translocase complex. Interacts with the SecYEG preprotein conducting channel. Has a central role in coupling the hydrolysis of ATP to the transfer of proteins into and across the cell membrane, serving as an ATP-driven molecular motor driving the stepwise translocation of polypeptide chains across the membrane. The protein is Protein translocase subunit SecA of Rhodococcus opacus (strain B4).